The primary structure comprises 305 residues: UDP-3-O-acyl-N-acetylglucosamine deacetylase (305 aa).

His79, His238, and Asp242 together coordinate Zn(2+). Catalysis depends on His265, which acts as the Proton donor.

Belongs to the LpxC family. Requires Zn(2+) as cofactor.

The enzyme catalyses a UDP-3-O-[(3R)-3-hydroxyacyl]-N-acetyl-alpha-D-glucosamine + H2O = a UDP-3-O-[(3R)-3-hydroxyacyl]-alpha-D-glucosamine + acetate. The protein operates within glycolipid biosynthesis; lipid IV(A) biosynthesis; lipid IV(A) from (3R)-3-hydroxytetradecanoyl-[acyl-carrier-protein] and UDP-N-acetyl-alpha-D-glucosamine: step 2/6. In terms of biological role, catalyzes the hydrolysis of UDP-3-O-myristoyl-N-acetylglucosamine to form UDP-3-O-myristoylglucosamine and acetate, the committed step in lipid A biosynthesis. This chain is UDP-3-O-acyl-N-acetylglucosamine deacetylase, found in Shigella dysenteriae serotype 1 (strain Sd197).